A 1166-amino-acid polypeptide reads, in one-letter code: Serine/threonine-protein kinase BRI1-like 1 (1166 aa).

A signal peptide spans 1 to 21 (MKQRWLLVLILCFFTTSLVMG). Over 22-776 (IHGKHLINDD…IHAKKQTVAT (755 aa)) the chain is Extracellular. N-linked (GlcNAc...) asparagine glycosylation occurs at Asn-33. The short motif at 66–73 (CSWRGVSC) is the Cys pair 1 element. 20 LRR repeats span residues 78 to 99 (RIVG…VNLT), 103 to 124 (NLQN…SGSD), 126 to 147 (YLQV…DYVF), 152 to 173 (NLVS…APSS), 176 to 197 (SLTT…SFIS), 202 to 224 (SLKY…SFGI), 227 to 248 (NLTF…ITLP), 252 to 274 (FLET…EYWG), 278 to 300 (NLKQ…LSLL), 303 to 325 (TLVI…FTAC), 327 to 349 (WLQN…VVSK), 352 to 375 (GITY…TNCS), 376 to 397 (NLRV…GFCS), 403 to 424 (VLEK…ELGK), 427 to 449 (SLKT…IWML), 451 to 473 (NLSD…VCVK), 476 to 498 (NLET…ISRC), 500 to 522 (NMIW…IGNL), 524 to 547 (KLAI…GNCK), and 548 to 570 (SLIW…LASQ). Residue Asn-97 is glycosylated (N-linked (GlcNAc...) asparagine). N-linked (GlcNAc...) asparagine glycosylation is present at Asn-157. Residues Asn-212, Asn-227, Asn-237, and Asn-257 are each glycosylated (N-linked (GlcNAc...) asparagine). 2 N-linked (GlcNAc...) asparagine glycosylation sites follow: Asn-362 and Asn-373. Asn-451 and Asn-461 each carry an N-linked (GlcNAc...) asparagine glycan. Residues Asn-521, Asn-532, Asn-558, and Asn-638 are each glycosylated (N-linked (GlcNAc...) asparagine). LRR repeat units lie at residues 664-686 (YLQV…FGGL), 688-710 (AIGV…LGSL), and 712-734 (FLSD…GQLT). Asn-722 and Asn-743 each carry an N-linked (GlcNAc...) asparagine glycan. Residues 748–755 (CGVPLRPC) carry the Cys pair 2 motif. A helical transmembrane segment spans residues 777–797 (AVIAGIAFSFMCFVMLVMALY). Over 798-1166 (RVRKVQKKEQ…LVEESRDKEP (369 aa)) the chain is Cytoplasmic. Residues Thr-848 and Thr-856 each carry the phosphothreonine modification. The 289-residue stretch at 859 to 1147 (FSAETMVGSG…KADTEEDESL (289 aa)) folds into the Protein kinase domain. ATP is bound by residues 865–873 (VGSGGFGEV) and Lys-887. Tyr-932 bears the Phosphotyrosine mark. Catalysis depends on Asp-987, which acts as the Proton acceptor. The residue at position 1022 (Ser-1022) is a Phosphoserine. Residue Tyr-1030 is modified to Phosphotyrosine. Thr-1141 is modified (phosphothreonine). A disordered region spans residues 1142–1166 (EEDESLDEFSLKETPLVEESRDKEP).

Belongs to the protein kinase superfamily. Ser/Thr protein kinase family. Predominantly expressed in vascular tissues. From 7 day old seedlings, it is expressed in the columella cells of the root tip, in the vascular initials in the meristematic region of the root and in vascular tissues. After germination, it is expressed in the stele cell and in the early differentiation zone of the root, where the expression continues from the root to the hypocotyls and cotyledons following the midvein. In mature plants, it is expressed in the vasculature of the leaf, predominantly in the midvein, and in the vascular bundles of inflorescence stems. Localizes to procambial cells of the vascular bundles located between the differentiating xylem and the phloem.

The protein resides in the cell membrane. The catalysed reaction is L-seryl-[protein] + ATP = O-phospho-L-seryl-[protein] + ADP + H(+). It catalyses the reaction L-threonyl-[protein] + ATP = O-phospho-L-threonyl-[protein] + ADP + H(+). Its function is as follows. Receptor with a serine/threonine-protein kinase activity. Regulates, in response to brassinosteroid binding, a signaling cascade involved in plant development. Binds brassinolide. May be involved in cell growth and vascular differentiation. The sequence is that of Serine/threonine-protein kinase BRI1-like 1 (BRL1) from Arabidopsis thaliana (Mouse-ear cress).